A 508-amino-acid chain; its full sequence is Histidine ammonia-lyase (508 aa).

A cross-link (5-imidazolinone (Ala-Gly)) is located at residues 143 to 145; the sequence is ASG. Serine 144 carries the 2,3-didehydroalanine (Ser) modification.

This sequence belongs to the PAL/histidase family. Contains an active site 4-methylidene-imidazol-5-one (MIO), which is formed autocatalytically by cyclization and dehydration of residues Ala-Ser-Gly.

The protein localises to the cytoplasm. The enzyme catalyses L-histidine = trans-urocanate + NH4(+). It participates in amino-acid degradation; L-histidine degradation into L-glutamate; N-formimidoyl-L-glutamate from L-histidine: step 1/3. The protein is Histidine ammonia-lyase of Klebsiella pneumoniae subsp. pneumoniae (strain ATCC 700721 / MGH 78578).